Here is an 88-residue protein sequence, read N- to C-terminus: U1-hexatoxin-Iw1c (88 aa).

The N-terminal stretch at 1–17 (LKFVVLICLVIMASTSA) is a signal peptide. Q18 bears the Pyrrolidone carboxylic acid mark. Cystine bridges form between C20–C31, C25–C39, C30–C65, C49–C73, and C67–C80. Positions 86 to 88 (RSE) are excised as a propeptide.

It belongs to the MIT-like AcTx family. In terms of tissue distribution, expressed by the venom gland.

It localises to the secreted. The protein is U1-hexatoxin-Iw1c of Illawarra wisharti (Illawarra funnel-web spider).